Reading from the N-terminus, the 528-residue chain is Phosphoenolpyruvate carboxykinase (ATP) (528 aa).

Residues Arg56, Tyr192, and Lys198 each coordinate substrate. ATP-binding positions include Lys198, His217, and 233-241 (GLSGTGKTT). Positions 198 and 217 each coordinate Mn(2+). Mn(2+) is bound at residue Asp254. Glu282, Arg319, and Thr444 together coordinate ATP. Arg319 is a binding site for substrate.

It belongs to the phosphoenolpyruvate carboxykinase (ATP) family. Mn(2+) is required as a cofactor.

It is found in the cytoplasm. It catalyses the reaction oxaloacetate + ATP = phosphoenolpyruvate + ADP + CO2. It participates in carbohydrate biosynthesis; gluconeogenesis. In terms of biological role, involved in the gluconeogenesis. Catalyzes the conversion of oxaloacetate (OAA) to phosphoenolpyruvate (PEP) through direct phosphoryl transfer between the nucleoside triphosphate and OAA. The chain is Phosphoenolpyruvate carboxykinase (ATP) from Geobacillus thermodenitrificans (strain NG80-2).